The primary structure comprises 510 residues: ATP synthase subunit alpha (510 aa).

Glycine 169–threonine 176 is an ATP binding site.

The protein belongs to the ATPase alpha/beta chains family. In terms of assembly, F-type ATPases have 2 components, CF(1) - the catalytic core - and CF(0) - the membrane proton channel. CF(1) has five subunits: alpha(3), beta(3), gamma(1), delta(1), epsilon(1). CF(0) has four main subunits: a(1), b(1), b'(1) and c(9-12).

Its subcellular location is the cell inner membrane. The catalysed reaction is ATP + H2O + 4 H(+)(in) = ADP + phosphate + 5 H(+)(out). Functionally, produces ATP from ADP in the presence of a proton gradient across the membrane. The alpha chain is a regulatory subunit. This is ATP synthase subunit alpha from Rhodospirillum rubrum (strain ATCC 11170 / ATH 1.1.1 / DSM 467 / LMG 4362 / NCIMB 8255 / S1).